The following is a 533-amino-acid chain: Retinoid isomerohydrolase (533 aa).

Residue Ser2 is modified to N-acetylserine. Cys112 carries the S-palmitoyl cysteine; in membrane form lipid modification. His180 serves as a coordination point for Fe cation. Cys231 is lipidated: S-palmitoyl cysteine; in membrane form. His241 and His313 together coordinate Fe cation. S-palmitoyl cysteine; in membrane form attachment occurs at residues Cys329 and Cys330. A Fe cation-binding site is contributed by His527.

The protein belongs to the carotenoid oxygenase family. The cofactor is Fe(2+). In terms of processing, palmitoylation by LRAT regulates ligand binding specificity; the palmitoylated form (membrane form) specifically binds all-trans-retinyl-palmitate, while the soluble unpalmitoylated form binds all-trans-retinol (vitamin A). In terms of tissue distribution, retinal pigment epithelium specific.

The protein localises to the cell membrane. The catalysed reaction is an all-trans-retinyl ester + H2O = 11-cis-retinol + a fatty acid + H(+). The enzyme catalyses lutein = (3R,3'S)-zeaxanthin. It carries out the reaction all-trans-retinyl hexadecanoate + H2O = 11-cis-retinol + hexadecanoate + H(+). Its function is as follows. Critical isomerohydrolase in the retinoid cycle involved in regeneration of 11-cis-retinal, the chromophore of rod and cone opsins. Catalyzes the cleavage and isomerization of all-trans-retinyl fatty acid esters to 11-cis-retinol which is further oxidized by 11-cis retinol dehydrogenase to 11-cis-retinal for use as visual chromophore. Essential for the production of 11-cis retinal for both rod and cone photoreceptors. Also capable of catalyzing the isomerization of lutein to meso-zeaxanthin an eye-specific carotenoid. The soluble form binds vitamin A (all-trans-retinol), making it available for LRAT processing to all-trans-retinyl ester. The membrane form, palmitoylated by LRAT, binds all-trans-retinyl esters, making them available for IMH (isomerohydrolase) processing to all-cis-retinol. The soluble form is regenerated by transferring its palmitoyl groups onto 11-cis-retinol, a reaction catalyzed by LRAT. In Cynops pyrrhogaster (Japanese fire-bellied newt), this protein is Retinoid isomerohydrolase (RPE65).